The following is a 45-amino-acid chain: Putative potassium channel blocker (45 aa).

In terms of tissue distribution, expressed by the venom gland.

Its subcellular location is the secreted. Inhibits potassium channels. The polypeptide is Putative potassium channel blocker (Hottentotta tamulus (Eastern Indian scorpion)).